The primary structure comprises 147 residues: Phospholipase A2 inhibitor subunit A (147 aa).

The C-type lectin domain maps to 62–143; it reads EICEEAGGHI…DENLLVVCEF (82 aa). 2 disulfide bridges follow: Cys64-Cys141 and Cys119-Cys133. A glycan (N-linked (GlcNAc...) asparagine) is linked at Asn103.

The protein belongs to the alpha-type phospholipase A2 inhibitor family. As to quaternary structure, homo- or heterotrimer; homotrimer of PLI-A chains, two PLI-A and one PLI-B chains, one PLI-A and two PLI-B chains, and homotrimer of PLI-B chains (with a ratio of 1:3:3:1). Expressed by the liver.

The protein resides in the secreted. Functionally, PLI binds directly phospholipase A2 in the presence or absence of calcium. Inhibitory activity of the PLI-A homotrimer is more specific than that of the PLI-B homotrimer. This chain is Phospholipase A2 inhibitor subunit A, found in Protobothrops flavoviridis (Habu).